The following is a 533-amino-acid chain: L-aspartate oxidase 1 (533 aa).

Residues 10–13 (SGLA), lysine 32, 39–46 (ASDWAQGG), and aspartate 214 contribute to the FAD site. Residue arginine 281 is the Proton donor/acceptor of the active site. Residues glutamate 366 and 382–383 (SL) each bind FAD.

The protein belongs to the FAD-dependent oxidoreductase 2 family. NadB subfamily. It depends on FAD as a cofactor.

Its subcellular location is the cytoplasm. It catalyses the reaction L-aspartate + O2 = iminosuccinate + H2O2. It functions in the pathway cofactor biosynthesis; NAD(+) biosynthesis; iminoaspartate from L-aspartate (oxidase route): step 1/1. Catalyzes the oxidation of L-aspartate to iminoaspartate, the first step in the de novo biosynthesis of NAD(+). This Ralstonia nicotianae (strain ATCC BAA-1114 / GMI1000) (Ralstonia solanacearum) protein is L-aspartate oxidase 1 (nadB1).